A 79-amino-acid chain; its full sequence is uncharacterized protein (79 aa).

Residues 15–37 (KSIVSVLALTSLGCGVFVISATA) traverse the membrane as a helical segment.

The protein resides in the membrane. This is an uncharacterized protein from Dictyostelium discoideum (Social amoeba).